A 123-amino-acid chain; its full sequence is RxLR effector protein Avh262 (123 aa).

An N-terminal signal peptide occupies residues 1-18; sequence MLPVAVVLVVFAVAVTSA. The segment at 24-46 is disordered; it reads VNPLPRRRRLKGTEEKGHHTNVN. The short motif at 30–50 is the RxLR-dEER element; the sequence is RRRLKGTEEKGHHTNVNDEER. A compositionally biased stretch (basic and acidic residues) spans 34–46; the sequence is KGTEEKGHHTNVN. Residues 60–82 form a biP-binding region; the sequence is LISKLKVKINAKLLAGDSAKPAT.

This sequence belongs to the RxLR effector family. In terms of assembly, interacts with host plant ER-luminal binding immunoglobulin proteins (BiPs) such as soybean BiP1, BiP2, BiP3 and BiP4.

It localises to the secreted. The protein resides in the host endoplasmic reticulum. Effector that suppresses plant defense responses during the early stages of pathogen infection. Suppresses cell death induced by effectors and PAMPs in plant hosts. Avh262 stabilizes endoplasmic reticulum (ER)-luminal binding immunoglobulin proteins (BiPs), which act as negative regulators of plant resistance to Phytophthora. By stabilizing BiPs, Avh262 suppresses ER stress-triggered cell death and facilitates Phytophthora infection. This is RxLR effector protein Avh262 from Phytophthora sojae (Soybean stem and root rot agent).